Reading from the N-terminus, the 427-residue chain is 3-phosphoshikimate 1-carboxyvinyltransferase (427 aa).

A phosphoenolpyruvate-binding site is contributed by Lys20. Positions 21 and 25 each coordinate 3-phosphoshikimate. The phosphoenolpyruvate site is built by Gly92 and Arg120. 3-phosphoshikimate contacts are provided by Ser166, Ala167, Gln168, Asp312, and Lys339. Gln168 lines the phosphoenolpyruvate pocket. The active-site Proton acceptor is the Asp312. 2 residues coordinate phosphoenolpyruvate: Arg343 and Arg385.

In terms of assembly, homotetramer.

It localises to the cytoplasm. The enzyme catalyses 3-phosphoshikimate + phosphoenolpyruvate = 5-O-(1-carboxyvinyl)-3-phosphoshikimate + phosphate. Its pathway is metabolic intermediate biosynthesis; chorismate biosynthesis; chorismate from D-erythrose 4-phosphate and phosphoenolpyruvate: step 6/7. Its activity is regulated as follows. Competitively inhibited by glyphosate. Activated by ammonium, rubidium or potassium ions. Functionally, catalyzes the transfer of the enolpyruvyl moiety of phosphoenolpyruvate (PEP) to the 5-hydroxyl of shikimate-3-phosphate (S3P) to produce enolpyruvyl shikimate-3-phosphate and inorganic phosphate. In Streptococcus pneumoniae serotype 4 (strain ATCC BAA-334 / TIGR4), this protein is 3-phosphoshikimate 1-carboxyvinyltransferase.